Consider the following 365-residue polypeptide: WAT1-related protein At4g01440 (365 aa).

The next 10 membrane-spanning stretches (helical) occupy residues 8–28, 40–60, 72–92, 101–121, 132–152, 181–201, 213–233, 249–269, 277–297, and 302–322; these read WTPV…NALV, VIAT…AFFW, ILVQ…YFFL, TLAC…ALIF, AGMG…LLTM, WIIG…WMLI, YSST…LSLI, IVTI…GTSW, IFTS…DFLI, and IFLG…IFLL. EamA domains follow at residues 25-144 and 196-321; these read NALV…LICI and GSWM…YIFL.

The protein belongs to the drug/metabolite transporter (DMT) superfamily. Plant drug/metabolite exporter (P-DME) (TC 2.A.7.4) family.

Its subcellular location is the membrane. This chain is WAT1-related protein At4g01440, found in Arabidopsis thaliana (Mouse-ear cress).